Consider the following 365-residue polypeptide: tRNA 2-selenouridine synthase (365 aa).

The region spanning 15 to 138 is the Rhodanese domain; it reads FVNDHPIMDA…MRQFLIETID (124 aa). Cysteine 98 serves as the catalytic S-selanylcysteine intermediate.

This sequence belongs to the SelU family. In terms of assembly, monomer.

The enzyme catalyses 5-methylaminomethyl-2-thiouridine(34) in tRNA + selenophosphate + (2E)-geranyl diphosphate + H2O + H(+) = 5-methylaminomethyl-2-selenouridine(34) in tRNA + (2E)-thiogeraniol + phosphate + diphosphate. The catalysed reaction is 5-methylaminomethyl-2-thiouridine(34) in tRNA + (2E)-geranyl diphosphate = 5-methylaminomethyl-S-(2E)-geranyl-thiouridine(34) in tRNA + diphosphate. It catalyses the reaction 5-methylaminomethyl-S-(2E)-geranyl-thiouridine(34) in tRNA + selenophosphate + H(+) = 5-methylaminomethyl-2-(Se-phospho)selenouridine(34) in tRNA + (2E)-thiogeraniol. It carries out the reaction 5-methylaminomethyl-2-(Se-phospho)selenouridine(34) in tRNA + H2O = 5-methylaminomethyl-2-selenouridine(34) in tRNA + phosphate. Functionally, involved in the post-transcriptional modification of the uridine at the wobble position (U34) of tRNA(Lys), tRNA(Glu) and tRNA(Gln). Catalyzes the conversion of 2-thiouridine (S2U-RNA) to 2-selenouridine (Se2U-RNA). Acts in a two-step process involving geranylation of 2-thiouridine (S2U) to S-geranyl-2-thiouridine (geS2U) and subsequent selenation of the latter derivative to 2-selenouridine (Se2U) in the tRNA chain. The protein is tRNA 2-selenouridine synthase of Shewanella halifaxensis (strain HAW-EB4).